A 380-amino-acid chain; its full sequence is uncharacterized protein (380 aa).

Residues 256-301 (DKEEKIQKSYQYQTELITELQGRIAELEKENQSLKENVKEPETSKP) adopt a coiled-coil conformation.

This is an uncharacterized protein from Pasteurella multocida (strain Pm70).